A 269-amino-acid chain; its full sequence is MNKKTRIAITGPIGRMGRMLIKEIQNNKHSHLTVAVVQKKHQLIGQDIGRIIGIGEIGVLISDELNIKKNDFDVLIDFTRPAGTLEYLKYCNKFKKNIVIGTTGFSKEEIDIIKSYSQKIAIIIASNFSIGINLLFQLIKKTTQIIGKDSDINILEYHHRNKIDAPSGTALEIGEVISKVMNWNLNQDSIYYQKGITGIRDAKKIGFSIVRAGNIVGKHTVMFSSYDEEIKITHTASNRMSFARGAIQSALWIHKKNTGLFDMTDVLSL.

NAD(+) is bound at residue 11–16; that stretch reads GPIGRM. Residue Lys-39 participates in NADP(+) binding. Residues 101 to 103 and 125 to 128 each bind NAD(+); these read GTT and ASNF. The Proton donor/acceptor role is filled by His-158. His-159 contacts (S)-2,3,4,5-tetrahydrodipicolinate. Catalysis depends on Lys-162, which acts as the Proton donor. (S)-2,3,4,5-tetrahydrodipicolinate is bound at residue 168–169; it reads GT.

This sequence belongs to the DapB family. As to quaternary structure, homotetramer.

The protein resides in the cytoplasm. The enzyme catalyses (S)-2,3,4,5-tetrahydrodipicolinate + NAD(+) + H2O = (2S,4S)-4-hydroxy-2,3,4,5-tetrahydrodipicolinate + NADH + H(+). It catalyses the reaction (S)-2,3,4,5-tetrahydrodipicolinate + NADP(+) + H2O = (2S,4S)-4-hydroxy-2,3,4,5-tetrahydrodipicolinate + NADPH + H(+). It functions in the pathway amino-acid biosynthesis; L-lysine biosynthesis via DAP pathway; (S)-tetrahydrodipicolinate from L-aspartate: step 4/4. Functionally, catalyzes the conversion of 4-hydroxy-tetrahydrodipicolinate (HTPA) to tetrahydrodipicolinate. The sequence is that of 4-hydroxy-tetrahydrodipicolinate reductase from Buchnera aphidicola subsp. Acyrthosiphon pisum (strain APS) (Acyrthosiphon pisum symbiotic bacterium).